The sequence spans 256 residues: tRNA pseudouridine synthase A (256 aa).

Residue Asp-55 is the Nucleophile of the active site. A substrate-binding site is contributed by Tyr-113.

It belongs to the tRNA pseudouridine synthase TruA family. In terms of assembly, homodimer.

It carries out the reaction uridine(38/39/40) in tRNA = pseudouridine(38/39/40) in tRNA. Its function is as follows. Formation of pseudouridine at positions 38, 39 and 40 in the anticodon stem and loop of transfer RNAs. This chain is tRNA pseudouridine synthase A, found in Limosilactobacillus reuteri (strain DSM 20016) (Lactobacillus reuteri).